The sequence spans 418 residues: UDP-N-acetylglucosamine 1-carboxyvinyltransferase (418 aa).

23-24 is a phosphoenolpyruvate binding site; it reads KN. UDP-N-acetyl-alpha-D-glucosamine is bound at residue Arg-92. The Proton donor role is filled by Cys-116. Cys-116 is subject to 2-(S-cysteinyl)pyruvic acid O-phosphothioketal. UDP-N-acetyl-alpha-D-glucosamine is bound by residues 121–125, 161–164, Asp-306, and Ile-328; these read RPVDL and KVSV.

It belongs to the EPSP synthase family. MurA subfamily.

It localises to the cytoplasm. The enzyme catalyses phosphoenolpyruvate + UDP-N-acetyl-alpha-D-glucosamine = UDP-N-acetyl-3-O-(1-carboxyvinyl)-alpha-D-glucosamine + phosphate. It participates in cell wall biogenesis; peptidoglycan biosynthesis. In terms of biological role, cell wall formation. Adds enolpyruvyl to UDP-N-acetylglucosamine. The polypeptide is UDP-N-acetylglucosamine 1-carboxyvinyltransferase (Vibrio parahaemolyticus serotype O3:K6 (strain RIMD 2210633)).